The primary structure comprises 138 residues: Nucleoside diphosphate kinase (138 aa).

Residues K11, F59, R87, T93, R104, and N114 each coordinate ATP. H117 functions as the Pros-phosphohistidine intermediate in the catalytic mechanism.

Belongs to the NDK family. Requires Mg(2+) as cofactor.

The protein resides in the cytoplasm. It carries out the reaction a 2'-deoxyribonucleoside 5'-diphosphate + ATP = a 2'-deoxyribonucleoside 5'-triphosphate + ADP. The enzyme catalyses a ribonucleoside 5'-diphosphate + ATP = a ribonucleoside 5'-triphosphate + ADP. Major role in the synthesis of nucleoside triphosphates other than ATP. The ATP gamma phosphate is transferred to the NDP beta phosphate via a ping-pong mechanism, using a phosphorylated active-site intermediate. The chain is Nucleoside diphosphate kinase from Saccharolobus solfataricus (strain ATCC 35092 / DSM 1617 / JCM 11322 / P2) (Sulfolobus solfataricus).